Here is a 460-residue protein sequence, read N- to C-terminus: MSARCCAGQLACCCGSAGCALCCGCCPKFRQSRSTRFMYLFYFTLVIIPCCVMMSPSVMKQMTEHIPFFEDFCKGIKAGDTCENLVGYSAVYRVCFGMACFFFVFCVLTFKVNNSKSCRASIHNGFWFFKLLLLGAMCSGAFFIPDQETFLNVWRYVGAVGSFFFICIQLLLIVEFAHKWNKNWTAGTVRNKLWYASLSLALIMYSIAVGGLALMAVFYTQWDDCMDNKILLGVHGGLCVLISLAAISPCVQNRQPHSGLLQPGLISCYVTYLTFSALTSKPEKVVKDEHGKNVTICVPDFGQDFRRDESMVTWLGTLLLVVCISYSCLTSTTRSSSDALQRRYGAPELEVARCCFCFGPDGEDTEEQQNVKEGPRVIYDEKKGTVYSYSYFHFVLLLASLYVMMTLTSWFHYENATIETFFVGSWSIFWVKMASCWMCVLLYLWTLVAPLCCPSRQFSV.

The Extracellular portion of the chain corresponds to 1–36; sequence MSARCCAGQLACCCGSAGCALCCGCCPKFRQSRSTR. The helical transmembrane segment at 37–57 threads the bilayer; that stretch reads FMYLFYFTLVIIPCCVMMSPS. Over 58–89 the chain is Cytoplasmic; sequence VMKQMTEHIPFFEDFCKGIKAGDTCENLVGYS. Residues 90-110 traverse the membrane as a helical segment; that stretch reads AVYRVCFGMACFFFVFCVLTF. Residues 111–124 lie on the Extracellular side of the membrane; sequence KVNNSKSCRASIHN. A glycan (N-linked (GlcNAc...) asparagine) is linked at Asn-113. The helical transmembrane segment at 125-145 threads the bilayer; that stretch reads GFWFFKLLLLGAMCSGAFFIP. The Cytoplasmic portion of the chain corresponds to 146 to 156; that stretch reads DQETFLNVWRY. The chain crosses the membrane as a helical span at residues 157 to 177; it reads VGAVGSFFFICIQLLLIVEFA. The Extracellular portion of the chain corresponds to 178–197; that stretch reads HKWNKNWTAGTVRNKLWYAS. Asn-183 carries an N-linked (GlcNAc...) asparagine glycan. The chain crosses the membrane as a helical span at residues 198 to 218; it reads LSLALIMYSIAVGGLALMAVF. The Cytoplasmic segment spans residues 219–229; sequence YTQWDDCMDNK. Residues 230–250 traverse the membrane as a helical segment; the sequence is ILLGVHGGLCVLISLAAISPC. Over 251–258 the chain is Extracellular; sequence VQNRQPHS. A helical membrane pass occupies residues 259 to 279; the sequence is GLLQPGLISCYVTYLTFSALT. The Cytoplasmic segment spans residues 280–309; sequence SKPEKVVKDEHGKNVTICVPDFGQDFRRDE. Residues 310 to 330 form a helical membrane-spanning segment; sequence SMVTWLGTLLLVVCISYSCLT. Topologically, residues 331–390 are extracellular; the sequence is STTRSSSDALQRRYGAPELEVARCCFCFGPDGEDTEEQQNVKEGPRVIYDEKKGTVYSYS. Residues 391-411 traverse the membrane as a helical segment; sequence YFHFVLLLASLYVMMTLTSWF. Residues 412–427 lie on the Cytoplasmic side of the membrane; the sequence is HYENATIETFFVGSWS. Residues 428 to 448 traverse the membrane as a helical segment; the sequence is IFWVKMASCWMCVLLYLWTLV. Residues 449–460 lie on the Extracellular side of the membrane; the sequence is APLCCPSRQFSV.

It belongs to the TDE1 family. As to expression, brain. Expressed at high levels in the white matter and the oligodendroglial cells of the brain. Expressed at low levels in the liver.

It is found in the cell membrane. The enzyme catalyses a 1,2-diacyl-sn-glycero-3-phospho-L-serine(in) = a 1,2-diacyl-sn-glycero-3-phospho-L-serine(out). It catalyses the reaction a 1,2-diacyl-sn-glycero-3-phosphocholine(in) = a 1,2-diacyl-sn-glycero-3-phosphocholine(out). The catalysed reaction is a 1,2-diacyl-sn-glycero-3-phosphoethanolamine(in) = a 1,2-diacyl-sn-glycero-3-phosphoethanolamine(out). In terms of biological role, restriction factor required to restrict infectivity of gammaretroviruses: acts by inhibiting an early step of viral infection. Impairs the penetration of the viral particle into the cytoplasm. Non-ATP-dependent, non-specific lipid transporter for phosphatidylserine, phosphatidylcholine, and phosphatidylethanolamine. Functions as a scramblase that flips lipids in both directions across the membrane. Phospholipid scrambling results in gammaretroviral surface exposure of phosphatidylserine and loss of membrane asymmetry, which leads to loss of infectivity. Enhances the incorporation of serine into phosphatidylserine and sphingolipids. May play a role in providing serine molecules for the formation of myelin glycosphingolipids in oligodendrocytes. This is Serine incorporator 5 (Serinc5) from Rattus norvegicus (Rat).